The primary structure comprises 155 residues: Protein-export protein SecB (155 aa).

The protein belongs to the SecB family. As to quaternary structure, homotetramer, a dimer of dimers. One homotetramer interacts with 1 SecA dimer.

It localises to the cytoplasm. One of the proteins required for the normal export of preproteins out of the cell cytoplasm. It is a molecular chaperone that binds to a subset of precursor proteins, maintaining them in a translocation-competent state. It also specifically binds to its receptor SecA. This is Protein-export protein SecB from Vibrio atlanticus (strain LGP32) (Vibrio splendidus (strain Mel32)).